Here is a 1777-residue protein sequence, read N- to C-terminus: Fatty acid synthase subunit alpha (1777 aa).

A disordered region spans residues 101–124 (APVESADNEPAQPAASSTPAAPAP). Residues 110–120 (PAQPAASSTPA) are compositionally biased toward low complexity. Residues 151–237 (LSAIDVVISI…KVMGGHIDRL (87 aa)) form the Carrier domain. The residue at position 186 (serine 186) is an O-(pantetheine 4'-phosphoryl)serine. The interval 563-803 (FTGRRVLVTG…ILSLLSGDIL (241 aa)) is ketoreductase (KR) domain. Residues 1007-1539 (KEIMHEVVID…QKGGLVVGIA (533 aa)) enclose the Ketosynthase family 3 (KS3) domain. Active-site for beta-ketoacyl synthase activity residues include cysteine 1193, histidine 1424, and histidine 1465. Residue aspartate 1661 coordinates Mg(2+). Residues 1661 to 1663 (DIE), 1706 to 1716 (EAIFKSLQIPS), 1730 to 1734 (SNGAQ), and 1760 to 1762 (ITH) each bind acetyl-CoA.

Belongs to the thiolase-like superfamily. Fungal fatty acid synthetase subunit alpha family. As to quaternary structure, fatty acid synthase is composed of alpha and beta subunits.

It catalyses the reaction acetyl-CoA + n malonyl-CoA + 2n NADPH + 4n H(+) = a long-chain-acyl-CoA + n CoA + n CO2 + 2n NADP(+).. It carries out the reaction a fatty acyl-[ACP] + malonyl-[ACP] + H(+) = a 3-oxoacyl-[ACP] + holo-[ACP] + CO2. The enzyme catalyses a (3R)-hydroxyacyl-[ACP] + NADP(+) = a 3-oxoacyl-[ACP] + NADPH + H(+). Its pathway is secondary metabolite biosynthesis. In terms of biological role, fatty acid synthase alpha subunit; part of the gene cluster that mediates the biosynthesis of oryzines, natural products with an unusual maleidride backbone. The two subunits of the fungal fatty acid synthase oryfasA and oryfasB probably form octenoic acid. This fatty acid is most likely activated by the acyl-CoA ligase oryP to give octenyl-CoA before the citrate synthase-like protein oryE catalyzes condensation with oxaloacetate to form tricarboxylic acid. The next steps of the pathways are conjectural, but a favorite possible route has been proposed, beginning with decarboxylation and concomitant dehydration by the decarboxylase oryM, followed by tautomerization, which may lead to the production of a diene intermediate. Reduction of this diene intermediate could give the known metabolite piliformic acid. On the pathway to oryzine B and oryzine A, however, hydroxylation of the diene by the alpha-ketoglutarate-dependent dioxygenase oryG and lactonisation by the lactonohydrolases oryH or oryL could give oryzine B directly. Finally, enoyl reduction by the dehydrogenase oryD would then convert oryzine B into oryzine A. The polypeptide is Fatty acid synthase subunit alpha (Aspergillus oryzae (strain ATCC 42149 / RIB 40) (Yellow koji mold)).